The following is a 974-amino-acid chain: Kinesin-like protein KIN-7A (974 aa).

Residues 1–29 (MTIKTPGTPVSKMDRTPAVTPGGSSRSRE) are disordered. One can recognise a Kinesin motor domain in the interval 31–353 (KIVVTVRLRP…LYFANRAKEV (323 aa)). 117–124 (GQTSSGKT) is a binding site for ATP. Coiled-coil stretches lie at residues 362–435 (VVSD…KGLN) and 565–603 (SANL…VMSL). Disordered regions lie at residues 605-649 (SNIS…PCSP) and 663-713 (NKAP…SSVN). The segment covering 616 to 628 (TKNHHHQSKKKKL) has biased composition (basic residues). Composition is skewed to polar residues over residues 638 to 649 (NRQNFLKSPCSP) and 666 to 682 (PQEN…TPQG). Positions 683-693 (SEKETPQKGEE) are enriched in basic and acidic residues.

This sequence belongs to the TRAFAC class myosin-kinesin ATPase superfamily. Kinesin family. KIN-7 subfamily. In terms of processing, phosphorylated at Thr-145, Thr-687 and Thr-703 by CDKAs and CDKBs. Phosphorylated NACK1 fails to mediate cytokinesis. Expressed in roots, flowers, pollen mother cells and embryos.

Its subcellular location is the cytoplasm. The protein localises to the cytoskeleton. It localises to the phragmoplast. Functionally, probable plus end-directed motor protein that functions in the NACK-PQR (ANP1-MKK6-MPK4) MAP kinase signaling pathway, which is essential for somatic cell cytokinesis, especially for the cell-plate formation and its expansion. Regulates the activity and the localization of ANP1, probably by association through the non-catalytic region of the kinase. Functionally redundant with NACK2 and essential to promote the progression of cytokinesis and for cellularization (formation of the cell plate) during microgametogenesis and megagametogenesis. The polypeptide is Kinesin-like protein KIN-7A (Arabidopsis thaliana (Mouse-ear cress)).